Here is a 232-residue protein sequence, read N- to C-terminus: MGSVLSSDSGKSAPPSATPRALERRGDPELPVTSFDCAVCLEVLHQPVRTRCGHVFCRSCIATSLKNNKWTCPYCRAYLPSEGVPATDVAKRMKSEYKNCAECDTLVCLGEMRAHIRTCQKYIDKYGPLQELGETAARCVCPFCQRELDEDSLLDHCITHHRSERRPVFCPLCRLIPDENPSSFSGSLIRHLQVSHTLFYDDFIDFNIIEEALIRRVLDRSLLEYVNQSNAT.

Positions 1-10 (MGSVLSSDSG) are enriched in polar residues. The tract at residues 1–27 (MGSVLSSDSGKSAPPSATPRALERRGD) is disordered. Gly2 carries N-myristoyl glycine lipidation. Positions 37 and 40 each coordinate Zn(2+). An RING-type zinc finger spans residues 37 to 76 (CAVCLEVLHQPVRTRCGHVFCRSCIATSLKNNKWTCPYCR). Residues 43–45 (VLH) form an interaction with the C2HC RNF-type zinc finger region. Residues Cys52, His54, Cys57, Cys60, Cys72, Cys75, Cys100, and Cys103 each contribute to the Zn(2+) site. The C2HC RNF-type zinc-finger motif lies at 100-119 (CAECDTLVCLGEMRAHIRTC). Residues 109–113 (LGEMR) form an interaction with the RING-type zinc finger region. Zn(2+) contacts are provided by His115 and Cys119. Residues 120-128 (QKYIDKYGP) form a linker region region. Residues 210–224 (EEALIRRVLDRSLLE) form a required for interaction with ubiquitin and for autoubiquitination region.

In terms of assembly, interacts with UBE2D1. Interacts with VCP/p97; leading to recruit RNF125 to RIGI and promote ubiquitination of RIGI. Autoubiquitinated, leading to its subsequent proteasomal degradation.

Its subcellular location is the golgi apparatus membrane. It carries out the reaction S-ubiquitinyl-[E2 ubiquitin-conjugating enzyme]-L-cysteine + [acceptor protein]-L-lysine = [E2 ubiquitin-conjugating enzyme]-L-cysteine + N(6)-ubiquitinyl-[acceptor protein]-L-lysine.. It functions in the pathway protein modification; protein ubiquitination. Functionally, E3 ubiquitin-protein ligase that mediates ubiquitination and subsequent proteasomal degradation of target proteins, such as RIGI, MAVS/IPS1, IFIH1/MDA5, JAK1 and p53/TP53. Acts as a negative regulator of type I interferon production by mediating ubiquitination of RIGI at 'Lys-181', leading to RIGI degradation. Mediates ubiquitination and subsequent degradation of p53/TP53. Mediates ubiquitination and subsequent degradation of JAK1. Acts as a positive regulator of T-cell activation. The polypeptide is E3 ubiquitin-protein ligase RNF125 (RNF125) (Macaca fascicularis (Crab-eating macaque)).